The following is an 851-amino-acid chain: Nucleolar RNA helicase 2 (851 aa).

A disordered region spans residues 1-260 (MPGKLRSGAK…IPVEQKEGAF (260 aa)). Residues Ser-7 and Ser-13 each carry the phosphoserine modification. 2 stretches are compositionally biased toward basic and acidic residues: residues 26–42 (PSEK…KTEE) and 99–113 (EPLE…KEII). Lys-39 carries the N6-acetyllysine modification. Tandem repeats lie at residues 117–153 (PSEE…GLSQ), 154–190 (PSEE…GLSQ), and 191–227 (PSEE…GLSQ). The segment at 117-227 (PSEEEADMPK…SPRLKDGLSQ (111 aa)) is 3 X 37 AA tandem repeats. Ser-118 bears the Phosphoserine mark. Over residues 133–145 (GKEANGDAGEKSP) the composition is skewed to basic and acidic residues. Lys-134 carries the post-translational modification N6-acetyllysine. Phosphoserine is present on residues Ser-144, Ser-155, Ser-181, Ser-192, Ser-218, Ser-236, Ser-243, Ser-244, and Ser-245. Residues 170-182 (GKEANGDAGEKSP) are compositionally biased toward basic and acidic residues. Residues 207 to 223 (GKEASGDAGEKSPRLKD) are compositionally biased toward basic and acidic residues. Over residues 226–237 (SQPSEPKSNSSD) the composition is skewed to polar residues. Residues 246-257 (ETEKEIPVEQKE) show a composition bias toward basic and acidic residues. The Q motif signature appears at 258–286 (GAFSNFPISEETVKLLKARGVNFLFPIQA). One can recognise a Helicase ATP-binding domain in the interval 289 to 468 (FHHVYSGKDL…KKYMKSTYEQ (180 aa)). 302–309 (ARTGTGKT) contacts ATP. Thr-368 carries the post-translational modification Phosphothreonine. The DEAD box signature appears at 411 to 414 (DEVD). The Helicase C-terminal domain occupies 501–645 (DVIRVYSGHQ…GVPSATEIIK (145 aa)). The residue at position 639 (Ser-639) is a Phosphoserine. Position 672 is an N6-acetyllysine (Lys-672). The segment at 783 to 851 (QPELEGPPDG…KRSFSKAFGQ (69 aa)) is disordered. 3 repeat units span residues 807 to 811 (FRGQR), 817 to 823 (FRGQGQR), and 829 to 833 (FRGQR). Residues 807-833 (FRGQRGGSRNFRGQGQRGGSRNFRGQR) are 3 X 5 AA repeats. Lys-847 bears the N6-acetyllysine mark.

Belongs to the DEAD box helicase family. DDX21/DDX50 subfamily. As to quaternary structure, homodimer; homodimerizes via its N-terminus. Found in a multi-helicase-TICAM1 complex at least composed of DHX36, DDX1, DDX21 and TICAM1; this complex exists in resting cells with or without poly(I:C) RNA ligand stimulation. Interacts (via C-terminus) with TICAM1 (via TIR domain). Interacts with DHX36 (via C-terminus); this interaction serves as bridges to TICAM1. Interacts (via C-terminus) with DDX1 (via B30.2/SPRY domain); this interaction serves as bridges to TICAM1. Component of the B-WICH complex, at least composed of SMARCA5/SNF2H, BAZ1B/WSTF, SF3B1, DEK, MYO1C, ERCC6, MYBBP1A and DDX21. Interacts with C1QBP. Interacts with JUN. Interacts with WDR46. Interacts with MCM3AP. Interacts with WDR43. Interacts with KPNA3. Interacts with GID4. Acetylation by CREBBP/CBP inhibits the helicase activity. Deacetylation by SIRT7 promotes the helicase activity and overcomes R-loop-mediated stalling of RNA polymerases. In terms of tissue distribution, highly expressed in liver and testis. Expressed at lower level in brain, lungs, and skeletal muscle.

The protein resides in the nucleus. It is found in the nucleolus. The protein localises to the nucleoplasm. It localises to the cytoplasm. Its subcellular location is the cytosol. The protein resides in the mitochondrion. The enzyme catalyses ATP + H2O = ADP + phosphate + H(+). With respect to regulation, acetylation inhibits the helicase activity. Its function is as follows. RNA helicase that acts as a sensor of the transcriptional status of both RNA polymerase (Pol) I and II: promotes ribosomal RNA (rRNA) processing and transcription from polymerase II (Pol II). Binds various RNAs, such as rRNAs, snoRNAs, 7SK and, at lower extent, mRNAs. In the nucleolus, localizes to rDNA locus, where it directly binds rRNAs and snoRNAs, and promotes rRNA transcription, processing and modification. Required for rRNA 2'-O-methylation, possibly by promoting the recruitment of late-acting snoRNAs SNORD56 and SNORD58 with pre-ribosomal complexes. In the nucleoplasm, binds 7SK RNA and is recruited to the promoters of Pol II-transcribed genes: acts by facilitating the release of P-TEFb from inhibitory 7SK snRNP in a manner that is dependent on its helicase activity, thereby promoting transcription of its target genes. Functions as cofactor for JUN-activated transcription: required for phosphorylation of JUN at 'Ser-77'. Can unwind double-stranded RNA (helicase) and can fold or introduce a secondary structure to a single-stranded RNA (foldase). Together with SIRT7, required to prevent R-loop-associated DNA damage and transcription-associated genomic instability: deacetylation by SIRT7 activates the helicase activity, thereby overcoming R-loop-mediated stalling of RNA polymerases. Involved in rRNA processing. May bind to specific miRNA hairpins. Component of a multi-helicase-TICAM1 complex that acts as a cytoplasmic sensor of viral double-stranded RNA (dsRNA) and plays a role in the activation of a cascade of antiviral responses including the induction of pro-inflammatory cytokines via the adapter molecule TICAM1. The polypeptide is Nucleolar RNA helicase 2 (Ddx21) (Mus musculus (Mouse)).